The sequence spans 177 residues: R-phycoerythrin beta chain (177 aa).

2 residues coordinate phycourobilin: Cys50 and Cys61. Asn72 is modified (N4-methylasparagine). 2 residues coordinate (2R,3E)-phycoerythrobilin: Cys82 and Cys158.

It belongs to the phycobiliprotein family. In terms of assembly, heterodimer of an alpha and a beta chain. Post-translationally, contains two covalently linked phycoerythrobilin chromophores and one covalently linked phycourobilin chromophore.

The protein resides in the plastid. It is found in the chloroplast thylakoid membrane. Its function is as follows. Light-harvesting photosynthetic bile pigment-protein from the phycobiliprotein complex. The chain is R-phycoerythrin beta chain (cpeB) from Pyropia yezoensis (Susabi-nori).